We begin with the raw amino-acid sequence, 474 residues long: MAGKTLYGKLWDIHEVARRDDGSSLIYIDRHILHEVTSPQAFEGLRLAGRPLWRVNANIATPDHNVPTTKAERQGSLLSIADTVSRLQVQTLDENCDDFGIFEFKMNDVRQGIVHVIGPEQGATLPGMTVVCGDSHTSTHGAFGALAHGIGTSEVEHVLATQCLVTQKMKNMQVRVEGTLPWGVTAKDIVLALIGKIGTAGGNGYAVEFSGSTIRALSMEGRMTICNMAIEAGARVGMVAVDEKTIQYVHGRPFAPKGSDWDAAVAFWRGLVSDPDAHFDRVVELSAEEIKPQVTWGTSPEMVSAVDQSVPDPERETDPVKKESLIRALKYMGLQPNDPITSIKLDRVFIGSCTNSRIEDLRAAAEVVKGRKVASTVKQAMVVPGSGLVKAQAEVEGLDKIFIEAGFEWREPGCSMCLAMNPDKLGSGEHCASTSNRNFEGRQGIGGRTHLVSPAMAAAAAVAGHFVDVREMMR.

Residues C353, C414, and C417 each contribute to the [4Fe-4S] cluster site.

Belongs to the aconitase/IPM isomerase family. LeuC type 1 subfamily. Heterodimer of LeuC and LeuD. It depends on [4Fe-4S] cluster as a cofactor.

The enzyme catalyses (2R,3S)-3-isopropylmalate = (2S)-2-isopropylmalate. It functions in the pathway amino-acid biosynthesis; L-leucine biosynthesis; L-leucine from 3-methyl-2-oxobutanoate: step 2/4. Functionally, catalyzes the isomerization between 2-isopropylmalate and 3-isopropylmalate, via the formation of 2-isopropylmaleate. This is 3-isopropylmalate dehydratase large subunit from Xylella fastidiosa (strain M23).